A 523-amino-acid polypeptide reads, in one-letter code: Lysine--tRNA ligase (523 aa).

The 'HIGH' region signature appears at 30 to 38 (PSGYVHVGN). Zn(2+) contacts are provided by Asp95, Cys99, His100, His106, Cys177, His180, Cys199, and His203. The short motif at 279 to 283 (KMSGS) is the 'KMSKS' region element.

Belongs to the class-I aminoacyl-tRNA synthetase family. The cofactor is Zn(2+).

The protein localises to the cytoplasm. The catalysed reaction is tRNA(Lys) + L-lysine + ATP = L-lysyl-tRNA(Lys) + AMP + diphosphate. This is Lysine--tRNA ligase (lysS) from Pyrococcus furiosus (strain ATCC 43587 / DSM 3638 / JCM 8422 / Vc1).